The chain runs to 197 residues: Putative manganese efflux pump MntP (197 aa).

A run of 6 helical transmembrane segments spans residues valine 8–alanine 28, valine 43–leucine 63, valine 66–leucine 86, leucine 123–leucine 143, tryptophan 146–leucine 166, and lysine 177–serine 197.

It belongs to the MntP (TC 9.B.29) family.

The protein localises to the cell inner membrane. Probably functions as a manganese efflux pump. The chain is Putative manganese efflux pump MntP from Psychrobacter arcticus (strain DSM 17307 / VKM B-2377 / 273-4).